The primary structure comprises 216 residues: Sperm microtubule inner protein 8 (216 aa).

Microtubule inner protein component of sperm flagellar doublet microtubules. In terms of tissue distribution, expressed in sperm.

It is found in the cytoplasm. The protein resides in the cytoskeleton. The protein localises to the flagellum axoneme. Microtubule inner protein (MIP) part of the dynein-decorated doublet microtubules (DMTs) in flagellum axoneme. May serve to reinforce and thus stabilize the microtubule structure in the sperm flagella. The protein is Sperm microtubule inner protein 8 (SPMIP8) of Bos taurus (Bovine).